The sequence spans 240 residues: uncharacterized protein (240 aa).

3 consecutive transmembrane segments (helical) span residues 12–32 (ICIH…ILMS), 66–86 (IQVL…FVLV), and 89–109 (ISGY…IYFF). N-linked (GlcNAc...) asparagine; by host glycans are attached at residues Asn-129 and Asn-157.

Its subcellular location is the membrane. This is an uncharacterized protein from Acanthamoeba polyphaga mimivirus (APMV).